A 387-amino-acid chain; its full sequence is MRKKLTALVLSALPLAAVADVSLYGEIKAGVEGRNFQLQLTEPPSKSQPQVKVTKAKSRIRTKISDFGSFIGFKGSEDLGEGLKAVWQLEQDVSVAGGGATQWGNRESFVGLAGEFGTLRAGRVANQFDDASQAIDPWDSNNDVASQLGIFKRHDDMPVSVRYDSPDFSGFSGSVQFVPIQNSKSAYTPAHYTRQNNTDVFVPAVVGKPGSDVYYAGLNYKNGGFAGSYAFKYARHANVGRDAFELFLLGSTSDEAKGTDPLKNHQVHRLTGGYEEGGLNLALAAQLDLSENGDKAKTKNSTTEIAATASYRFGNAVPRISYAHGFDLIERGKKGENTSYDQIIAGVDYDFSKRTSAIVSGAWLKRNTGIGNYTQINAASVGLRHKF.

Positions 1–19 (MRKKLTALVLSALPLAAVA) are cleaved as a signal peptide.

Belongs to the Gram-negative porin family. As to quaternary structure, homotrimer.

The protein resides in the cell outer membrane. In terms of biological role, serves as a slightly cation selective porin. Major antigen on the gonococcal cell surface and it may have pathogenic properties in addition to its porin activity. In Neisseria meningitidis serogroup C, this protein is Major outer membrane protein P.IA (porA).